The following is a 95-amino-acid chain: Co-chaperonin GroES (95 aa).

It belongs to the GroES chaperonin family. Heptamer of 7 subunits arranged in a ring. Interacts with the chaperonin GroEL.

It localises to the cytoplasm. Its function is as follows. Together with the chaperonin GroEL, plays an essential role in assisting protein folding. The GroEL-GroES system forms a nano-cage that allows encapsulation of the non-native substrate proteins and provides a physical environment optimized to promote and accelerate protein folding. GroES binds to the apical surface of the GroEL ring, thereby capping the opening of the GroEL channel. The sequence is that of Co-chaperonin GroES from Bordetella petrii (strain ATCC BAA-461 / DSM 12804 / CCUG 43448).